Here is a 218-residue protein sequence, read N- to C-terminus: MESKIIKNGCIIIKYERKKRYCKYCEELLPSYLETWKTHHPKCWYKDKRIFINVANSDGHCDELVFYDENKHDNIIKYSRKKITTKHELEEYPIGSLISYTNKKNEFRKAGYVLKYSDNYFIYVTPDFQTKYRVKYKNVLEMWVKKVDSPLKDLIWQAETIQEKTNFPIFIGNKVIYYAKNNSDRDKYMDTTKYKKLVKWYDHFGNNQTLLKFLNTVK.

Belongs to the mimivirus L6/L7/L57 family.

This is an uncharacterized protein from Acanthamoeba polyphaga mimivirus (APMV).